The chain runs to 78 residues: MSAICQVTGRKPEFGKQVSHSHRRTSRRWNPNVQRRRYYLPSEGRTITLTVSTKGMKIIDRDGIESVVAKIRARGEKI.

Belongs to the bacterial ribosomal protein bL28 family.

In Corynebacterium aurimucosum (strain ATCC 700975 / DSM 44827 / CIP 107346 / CN-1) (Corynebacterium nigricans), this protein is Large ribosomal subunit protein bL28.